A 52-amino-acid polypeptide reads, in one-letter code: uncharacterized protein (52 aa).

This is an uncharacterized protein from Saccharomyces cerevisiae (strain ATCC 204508 / S288c) (Baker's yeast).